The sequence spans 34 residues: MENNSRTMPHIRRTTHIMKFAHRNSFDFHFFNAR.

The tract at residues M1–R13 is sensor domain. An Ornithine recognition loop motif is present at residues H10–H16. R13 serves as a coordination point for L-ornithine. The interval T14–R34 is effector domain.

The protein belongs to the speF operon leader peptide family. As to quaternary structure, binds ornithine in stalled 70S ribosomes, blocking the upper two-thirds of the exit tunnel. Contacts 23S rRNA and ribosomal proteins L4 and L22.

In terms of biological role, a small protein (arrest peptide) encoded upstream of inducible ornithine carboxylase gene (speF) that controls expression of downstream genes (speF and patE) by nascent chain-translational arrest and transcriptional attenuation. In the presence of ornithine a toeprint due to ribosomal arrest can be seen on the speFL transcript. Only L-ornithine (not other tested amino acids) has this effect. It is thought that in the presence of ornithine, ribosomal stalling on speFL prevents binding of Rho transcription termination factor to a downstream rut site allowing transcription of the operon. In the absence of ornithine, ribosomes terminate translation and are recycled, exposing the rut site allowing Rho to bind and prematurely terminate transcription. The presence of a pair of rare Arg codons could slow down translation to prevent polysome accumulation and to expose the rut site to Rho. The polypeptide is Leader peptide SpeFL (Escherichia coli (strain K12)).